The sequence spans 272 residues: MTEVRRRGRPGQAEPTAQKGAQALERGIAILQYLERSGGSSSVSDISGSLDLPLSTTFRLLKVLQAADFVYQDSQLGWWHIGLGVFNVGSAYIHNRDVLSVAGPFMHRLMLLSGETVNVAIRNGNEAVLIGQKECKSMVRMCAPLGSRLPLHASGAGKALLYPLTEEELVGIVVNTGLRRFTPTTLVDLPILLKNLERAREQGYTVDQEEHVVGLNCIASAIYDDAGSVVAAISISGPASRLTEDRFISQGELVRDTAKDISTALGLKPPVA.

A disordered region spans residues Met1–Gly20. Residues Ala21–Leu83 enclose the HTH iclR-type domain. Residues Val43–Lys62 constitute a DNA-binding region (H-T-H motif). An IclR-ED domain is found at Val98 to Leu267. Residues Ser154 to Ala156, Asp207, Cys217, and Ser234 to Ser236 each bind glyoxylate.

Functionally, negative regulator of allantoin and glyoxylate utilization operons. Binds to the gcl promoter and to the allS-allA intergenic region. In Salmonella typhi, this protein is HTH-type transcriptional repressor AllR (allR).